A 113-amino-acid chain; its full sequence is Endoribonuclease SymE (113 aa).

One can recognise a SpoVT-AbrB domain in the interval 29–74 (SRYPDYSRIPAITLKGQWLEAAGFATGTAVDVKVMEGCIVLTAQPA).

The protein belongs to the SymE family.

It localises to the cytoplasm. Functionally, involved in the degradation and recycling of damaged RNA. It is itself a target for degradation by the ATP-dependent protease Lon. The sequence is that of Endoribonuclease SymE from Shigella flexneri serotype 5b (strain 8401).